Here is a 173-residue protein sequence, read N- to C-terminus: MARMNRPAPVEVSYRHMRFLITHNPSNATLSTFIEDLKKYGATTVVRVCEVTYDKTPLEKDGITVVDWPFDDGAPPPGKVVEDWLSLLKAKFYNDPGSCVAVHCVAGLGRAPVLVALALIESGMKYEDAIQFIRQKRRGAINSKQLTYLEKYRPKQRLRFKDPHTHKTRCCVM.

The 154-residue stretch at 8–161 folds into the Tyrosine-protein phosphatase domain; sequence APVEVSYRHM…YRPKQRLRFK (154 aa). Cysteine 49 and cysteine 104 form a disulfide bridge. Aspartate 72 (proton donor) is an active-site residue. The active-site Phosphocysteine intermediate is the cysteine 104. A substrate-binding site is contributed by arginine 110. At cysteine 170 the chain carries Cysteine methyl ester. The S-farnesyl cysteine moiety is linked to residue cysteine 170. A propeptide spans 171–173 (removed in mature form); it reads CVM.

It belongs to the protein-tyrosine phosphatase family. As to quaternary structure, interacts with tubulin. Post-translationally, farnesylated. Farnesylation is required for membrane targeting. Unfarnesylated forms are shifted into the nucleus. In terms of tissue distribution, present in the small intestine, where it is located in the differentiated epithelial cells of the villus but not in the proliferating crypt cells (at protein level). Expressed in heart and skeletal muscle, and at lower levels in lung, spleen and testis.

It localises to the cell membrane. The protein localises to the early endosome. It catalyses the reaction O-phospho-L-tyrosyl-[protein] + H2O = L-tyrosyl-[protein] + phosphate. With respect to regulation, inhibited by sodium orthovanadate and peroxovanadium compounds, and by pentamidine. Functionally, protein tyrosine phosphatase which stimulates progression from G1 into S phase during mitosis. Enhances cell proliferation, cell motility and invasive activity, and promotes cancer metastasis. May be involved in the progression of cardiac hypertrophy by inhibiting intracellular calcium mobilization in response to angiotensin II. The protein is Protein tyrosine phosphatase type IVA 3 (Ptp4a3) of Mus musculus (Mouse).